The following is a 442-amino-acid chain: tRNA-2-methylthio-N(6)-dimethylallyladenosine synthase (442 aa).

Residues 6–122 enclose the MTTase N-terminal domain; it reads RKFYIHTFGC…LPALIAEAGD (117 aa). The [4Fe-4S] cluster site is built by cysteine 15, cysteine 51, cysteine 85, cysteine 157, cysteine 161, and cysteine 164. One can recognise a Radical SAM core domain in the interval 143–373; sequence RTQSLNAFVP…IDLQNGISAE (231 aa). In terms of domain architecture, TRAM spans 376-439; the sequence is GLAPGSVVEV…SATLFGQSAE (64 aa).

It belongs to the methylthiotransferase family. MiaB subfamily. In terms of assembly, monomer. [4Fe-4S] cluster is required as a cofactor.

The protein resides in the cytoplasm. It carries out the reaction N(6)-dimethylallyladenosine(37) in tRNA + (sulfur carrier)-SH + AH2 + 2 S-adenosyl-L-methionine = 2-methylsulfanyl-N(6)-dimethylallyladenosine(37) in tRNA + (sulfur carrier)-H + 5'-deoxyadenosine + L-methionine + A + S-adenosyl-L-homocysteine + 2 H(+). In terms of biological role, catalyzes the methylthiolation of N6-(dimethylallyl)adenosine (i(6)A), leading to the formation of 2-methylthio-N6-(dimethylallyl)adenosine (ms(2)i(6)A) at position 37 in tRNAs that read codons beginning with uridine. The protein is tRNA-2-methylthio-N(6)-dimethylallyladenosine synthase of Chlorobium phaeobacteroides (strain DSM 266 / SMG 266 / 2430).